The following is a 190-amino-acid chain: Protein GrpE (190 aa).

Residues 1 to 26 (MADKEKDAVIVDETEHVDVDSKESKK) show a composition bias toward basic and acidic residues. The segment at 1 to 31 (MADKEKDAVIVDETEHVDVDSKESKKEKKTK) is disordered.

This sequence belongs to the GrpE family. Homodimer.

Its subcellular location is the cytoplasm. In terms of biological role, participates actively in the response to hyperosmotic and heat shock by preventing the aggregation of stress-denatured proteins, in association with DnaK and GrpE. It is the nucleotide exchange factor for DnaK and may function as a thermosensor. Unfolded proteins bind initially to DnaJ; upon interaction with the DnaJ-bound protein, DnaK hydrolyzes its bound ATP, resulting in the formation of a stable complex. GrpE releases ADP from DnaK; ATP binding to DnaK triggers the release of the substrate protein, thus completing the reaction cycle. Several rounds of ATP-dependent interactions between DnaJ, DnaK and GrpE are required for fully efficient folding. This is Protein GrpE from Acholeplasma laidlawii (strain PG-8A).